We begin with the raw amino-acid sequence, 319 residues long: MSLNFLEFEQPIAELEAKIDSLTAVSRQGEKLDINLDEEVQRLREKSLELTRKIFSDLGAWQIAQLARHPRRPYTLDYIQHIFTDFEELAGDRAYADDKAIVGGLARIDGRPVMVIGHQKGRETKEKIRRNFGMPAPEGYRKALRLMEMAERFKLPIITFIDTPGAYPGVGAEERGQSEAIARNLREMSRLSVPVICTVIGEGGSGGALAIGVGDKVNMLQYSTYSVISPEGCASILWKSAEKAPLAAEAMGITAPRLKELELVDTVISEPLGGAHRDYEAISTSLKAQLLIDLAELDHLTSEELVNRRYQRLMQYGYC.

Positions 35 to 296 (NLDEEVQRLR…KAQLLIDLAE (262 aa)) constitute a CoA carboxyltransferase C-terminal domain.

Belongs to the AccA family. In terms of assembly, acetyl-CoA carboxylase is a heterohexamer composed of biotin carboxyl carrier protein (AccB), biotin carboxylase (AccC) and two subunits each of ACCase subunit alpha (AccA) and ACCase subunit beta (AccD).

The protein resides in the cytoplasm. It catalyses the reaction N(6)-carboxybiotinyl-L-lysyl-[protein] + acetyl-CoA = N(6)-biotinyl-L-lysyl-[protein] + malonyl-CoA. It participates in lipid metabolism; malonyl-CoA biosynthesis; malonyl-CoA from acetyl-CoA: step 1/1. In terms of biological role, component of the acetyl coenzyme A carboxylase (ACC) complex. First, biotin carboxylase catalyzes the carboxylation of biotin on its carrier protein (BCCP) and then the CO(2) group is transferred by the carboxyltransferase to acetyl-CoA to form malonyl-CoA. The sequence is that of Acetyl-coenzyme A carboxylase carboxyl transferase subunit alpha from Photorhabdus laumondii subsp. laumondii (strain DSM 15139 / CIP 105565 / TT01) (Photorhabdus luminescens subsp. laumondii).